The primary structure comprises 548 residues: Glucose-6-phosphate isomerase (548 aa).

Glu-355 (proton donor) is an active-site residue. Active-site residues include His-386 and Lys-514.

It belongs to the GPI family.

The protein resides in the cytoplasm. The catalysed reaction is alpha-D-glucose 6-phosphate = beta-D-fructose 6-phosphate. Its pathway is carbohydrate biosynthesis; gluconeogenesis. It participates in carbohydrate degradation; glycolysis; D-glyceraldehyde 3-phosphate and glycerone phosphate from D-glucose: step 2/4. Its function is as follows. Catalyzes the reversible isomerization of glucose-6-phosphate to fructose-6-phosphate. The polypeptide is Glucose-6-phosphate isomerase (Yersinia enterocolitica serotype O:8 / biotype 1B (strain NCTC 13174 / 8081)).